A 298-amino-acid chain; its full sequence is Cation-efflux pump FieF (298 aa).

A helical membrane pass occupies residues 24–44 (LLIKIFAWWYTGSVSILAALV). Residues D45 and D49 each contribute to the Zn(2+) site. A run of 2 helical transmembrane segments spans residues 80–100 (SLAA…LTSI) and 112–132 (PGVG…LVTF). The Zn(2+) site is built by H151 and D155. A run of 2 helical transmembrane segments spans residues 154–174 (SDVM…YGWH) and 176–196 (ADAL…LRMG).

The protein belongs to the cation diffusion facilitator (CDF) transporter (TC 2.A.4) family. FieF subfamily. In terms of assembly, homodimer.

It localises to the cell inner membrane. The enzyme catalyses Zn(2+)(in) + H(+)(out) = Zn(2+)(out) + H(+)(in). It carries out the reaction Cd(2+)(in) + H(+)(out) = Cd(2+)(out) + H(+)(in). The catalysed reaction is Fe(2+)(in) + H(+)(out) = Fe(2+)(out) + H(+)(in). Divalent metal cation transporter which exports Zn(2+), Cd(2+) and possibly Fe(2+). May be involved in zinc and iron detoxification by efflux. The polypeptide is Cation-efflux pump FieF (Salmonella typhi).